The sequence spans 648 residues: Biosynthetic arginine decarboxylase (648 aa).

Residue Lys-109 is modified to N6-(pyridoxal phosphate)lysine. Residue 291–301 participates in substrate binding; sequence IDVGGGLGIDF.

Belongs to the Orn/Lys/Arg decarboxylase class-II family. SpeA subfamily. Requires Mg(2+) as cofactor. It depends on pyridoxal 5'-phosphate as a cofactor.

The enzyme catalyses L-arginine + H(+) = agmatine + CO2. Its pathway is amine and polyamine biosynthesis; agmatine biosynthesis; agmatine from L-arginine: step 1/1. In terms of biological role, catalyzes the biosynthesis of agmatine from arginine. The sequence is that of Biosynthetic arginine decarboxylase from Prochlorococcus marinus (strain MIT 9515).